A 271-amino-acid polypeptide reads, in one-letter code: 3-methyl-2-oxobutanoate hydroxymethyltransferase (271 aa).

Mg(2+) is bound by residues Asp53 and Asp92. 3-methyl-2-oxobutanoate is bound by residues Asp53 to Ser54, Asp92, and Lys120. Glu122 contacts Mg(2+). Glu189 (proton acceptor) is an active-site residue.

The protein belongs to the PanB family. As to quaternary structure, homodecamer; pentamer of dimers. The cofactor is Mg(2+).

The protein resides in the cytoplasm. It catalyses the reaction 3-methyl-2-oxobutanoate + (6R)-5,10-methylene-5,6,7,8-tetrahydrofolate + H2O = 2-dehydropantoate + (6S)-5,6,7,8-tetrahydrofolate. It functions in the pathway cofactor biosynthesis; (R)-pantothenate biosynthesis; (R)-pantoate from 3-methyl-2-oxobutanoate: step 1/2. Catalyzes the reversible reaction in which hydroxymethyl group from 5,10-methylenetetrahydrofolate is transferred onto alpha-ketoisovalerate to form ketopantoate. The protein is 3-methyl-2-oxobutanoate hydroxymethyltransferase of Burkholderia vietnamiensis (strain G4 / LMG 22486) (Burkholderia cepacia (strain R1808)).